Consider the following 364-residue polypeptide: MYFFTISRLTSFISYGILGALGILTFLYLYDAYLAKSFQRLVIERRSKRESLSKNLSPNDNSHNSKIDISSDYQLLNEYKVAYYLRPGIIPLNHNLAKQEVFVFLHGLGGQMSQFQKVMSYFPPTACLFSFDYWGCGLSRQAFPNQRIGSVDQLTTKGLSKLTYKVLEKLFPENTQFILIGHSMGATIASRVSKMLQTRCTALLLLNPKIRFTSKEISMIVRLRKTPNAFISLYRLLDRFHGLRSSSVTRSLSKNIKGDGDAVRAQLWLWNRQSNTKIWKTMLMGLEELLEPGFHFPKCPILILFGEFDPVSSLKDKVFFQDYPGNYTFKEIDTGHCSMLEQPSEVYNCIDSFLDKFSTTDHNI.

The Cytoplasmic segment spans residues 1 to 8 (MYFFTISR). The helical; Signal-anchor for type II membrane protein transmembrane segment at 9–29 (LTSFISYGILGALGILTFLYL) threads the bilayer. Residues 30 to 364 (YDAYLAKSFQ…DKFSTTDHNI (335 aa)) are Lumenal-facing. Ser-183 (charge relay system) is an active-site residue. Asn-326 carries an N-linked (GlcNAc...) asparagine glycan. His-336 functions as the Charge relay system in the catalytic mechanism.

Belongs to the AB hydrolase superfamily.

It localises to the endoplasmic reticulum membrane. This chain is Abhydrolase domain-containing protein C57A10.08c, found in Schizosaccharomyces pombe (strain 972 / ATCC 24843) (Fission yeast).